The chain runs to 212 residues: Glycerol-3-phosphate acyltransferase (212 aa).

The next 6 helical transmembrane spans lie at 6 to 26 (IAVL…GLIL), 56 to 76 (LAAL…LLAH), 92 to 112 (LTLI…WLGF), 122 to 142 (LGVS…AWLL), 150 to 170 (SSVG…FMPA), and 171 to 191 (SHEI…LLLW).

It belongs to the PlsY family. As to quaternary structure, probably interacts with PlsX.

Its subcellular location is the cell inner membrane. The enzyme catalyses an acyl phosphate + sn-glycerol 3-phosphate = a 1-acyl-sn-glycero-3-phosphate + phosphate. It functions in the pathway lipid metabolism; phospholipid metabolism. In terms of biological role, catalyzes the transfer of an acyl group from acyl-phosphate (acyl-PO(4)) to glycerol-3-phosphate (G3P) to form lysophosphatidic acid (LPA). This enzyme utilizes acyl-phosphate as fatty acyl donor, but not acyl-CoA or acyl-ACP. The chain is Glycerol-3-phosphate acyltransferase from Zymomonas mobilis subsp. mobilis (strain ATCC 31821 / ZM4 / CP4).